Here is a 418-residue protein sequence, read N- to C-terminus: MPMLNAQQFLNQFSLEAPLDESLYPIIRDICQEVKVHGDKALKMYNLTFDHTKTDHLEISHEQIKAAFDTLDEKTKQALQQSYERIKAYQESIKQMNQQLEESVECYEIYHPLESVGIYVPGGKASYPSTVLMTATLAQVAGVENIVVVTPPQPNGVSQEVLAACYITQVNQVFQVGGAQSIAALTYGTETIPKVDKIVGPGNQFVAYAKKYLFGQVGIDQIAGPTEIALIIDDTADLDAIVYDVFAQAEHDELARTYVISEDAQVLKDLESRIAKALPNVDRYDIVSKSIANQHYLIHASNFDEACHVMNTIAPEHASIQTVNPQPYIEKVKYVGALFIGHYSPEVIGDYVAGPSHVLPTNRTARFTNGLSVNDFLTRNTVIHLSKDTFDQIADSAQHIAHVEALYNHQQSILIRQS.

Positions 119, 180, and 203 each coordinate NAD(+). Positions 226, 248, and 251 each coordinate substrate. Positions 248 and 251 each coordinate Zn(2+). Active-site proton acceptor residues include Glu-316 and His-317. The substrate site is built by His-317, Asp-350, Glu-404, and His-409. Asp-350 is a binding site for Zn(2+). His-409 provides a ligand contact to Zn(2+).

Belongs to the histidinol dehydrogenase family. Requires Zn(2+) as cofactor.

It carries out the reaction L-histidinol + 2 NAD(+) + H2O = L-histidine + 2 NADH + 3 H(+). It participates in amino-acid biosynthesis; L-histidine biosynthesis; L-histidine from 5-phospho-alpha-D-ribose 1-diphosphate: step 9/9. Functionally, catalyzes the sequential NAD-dependent oxidations of L-histidinol to L-histidinaldehyde and then to L-histidine. The polypeptide is Histidinol dehydrogenase (Staphylococcus aureus (strain MRSA252)).